The following is a 620-amino-acid chain: UvrABC system protein C (620 aa).

In terms of domain architecture, GIY-YIG spans aspartate 13–isoleucine 92. Residues threonine 204–isoleucine 239 enclose the UVR domain.

This sequence belongs to the UvrC family. As to quaternary structure, interacts with UvrB in an incision complex.

It is found in the cytoplasm. In terms of biological role, the UvrABC repair system catalyzes the recognition and processing of DNA lesions. UvrC both incises the 5' and 3' sides of the lesion. The N-terminal half is responsible for the 3' incision and the C-terminal half is responsible for the 5' incision. In Clostridium perfringens (strain ATCC 13124 / DSM 756 / JCM 1290 / NCIMB 6125 / NCTC 8237 / Type A), this protein is UvrABC system protein C.